Reading from the N-terminus, the 420-residue chain is UPF0053 protein HI_0107 (420 aa).

One can recognise a CNNM transmembrane domain in the interval 2 to 190 (DSIPLSTLFI…GEATPNEQHP (189 aa)). 4 helical membrane passes run 3–23 (SIPL…SAYF), 65–85 (FILI…TVIG), 92–112 (AGVA…SEIF), and 126–146 (FFSS…VWLM). 2 CBS domains span residues 208–268 (MVPR…KNEF) and 273–333 (LIRA…FTTS).

This sequence belongs to the UPF0053 family.

It localises to the cell membrane. This is UPF0053 protein HI_0107 from Haemophilus influenzae (strain ATCC 51907 / DSM 11121 / KW20 / Rd).